The primary structure comprises 1673 residues: AF4/FMR2 family member lilli (1673 aa).

Disordered stretches follow at residues 1 to 24, 54 to 80, 125 to 302, 407 to 534, 575 to 604, 722 to 1086, 1114 to 1133, 1141 to 1160, and 1187 to 1315; these read MAQQQQQQMQQQQQHHTSSINNNN, YSQNYNMEEYERRKRREREKIERQQGI, SRSA…PPEK, QLPP…GAQN, VGTGSGSGGTLSSGGSSSNKTPSPTESNKW, RLSD…INTL, QGKLDAAAQPSAPQAPPAAP, RMTPTQQQQLGAGLASPART, and KLTP…MGKE. Residues 71 to 80 are compositionally biased toward basic and acidic residues; sequence REKIERQQGI. Low complexity-rich tracts occupy residues 146 to 180 and 223 to 244; these read SLGHSPSSASSAAGPTAASATTSLPGQQQHYQQQQ and PRTSSSNSNSSSVTNNASSGGV. Thr420 carries the phosphothreonine modification. The span at 428–441 shows a compositional bias: basic and acidic residues; the sequence is LKTEKNHSLEKQDS. Positions 443–454 are enriched in acidic residues; the sequence is LENDLELSESED. 2 positions are modified to phosphoserine: Ser450 and Ser452. Residues 465–486 show a composition bias toward low complexity; the sequence is GNSSNSSESDSSESGSESSSKN. Residues 491 to 500 are compositionally biased toward basic residues; the sequence is HPNHQQHHHQ. Residues 501-525 are compositionally biased toward low complexity; the sequence is LQQQQQQQQATMQQQQVLQQQHRSQ. A compositionally biased stretch (gly residues) spans 577 to 586; it reads TGSGSGGTLS. Over residues 594-604 the composition is skewed to polar residues; sequence KTPSPTESNKW. Residues 724-757 are compositionally biased toward low complexity; it reads SDSGTSASGSSSSSSSSSDSAMGGEVVPMPGPGE. Polar residues predominate over residues 775-788; that stretch reads QPTQSQKAPPSNSV. The span at 802 to 812 shows a compositional bias: basic residues; sequence QRQKKPRKKKA. Ser821 and Ser822 each carry phosphoserine. The segment at residues 851–863 is a DNA-binding region (a.T hook); it reads KKGRGRPRKQQQS. Positions 860-898 are enriched in low complexity; that stretch reads QQQSGGSGNLSSASAGSSSQTKGPTLTAAKKPLAKTPLA. Phosphoserine is present on residues Ser871 and Ser873. The span at 909 to 919 shows a compositional bias: polar residues; sequence SQSSSNGNTPT. Low complexity-rich tracts occupy residues 949 to 965 and 993 to 1004; these read SSSAESSSKSSSSSSSS and GSGSSSPSSSGS. Over residues 1011–1022 the composition is skewed to polar residues; sequence TRSQVGSGQALA. The span at 1034–1060 shows a compositional bias: low complexity; sequence SQHSQHLSSSDCSSSSGGCTAVCSSSS. The segment covering 1065-1082 has biased composition (basic and acidic residues); it reads EGRREKERERKPKSDKNK. Residues 1190 to 1205 are compositionally biased toward polar residues; that stretch reads PAQQNGHLTPKDQATN. Basic and acidic residues-rich tracts occupy residues 1226–1243 and 1252–1282; these read EHPVKPEPELDAGYEAKF and FQLKQERDRDRERERERERERERDREREQPP. Ser1362 is modified (phosphoserine). Thr1364 bears the Phosphothreonine mark. Residues 1564-1583 are compositionally biased toward low complexity; that stretch reads NTPSSISPSNSVGSQGSGSN. A disordered region spans residues 1564-1588; sequence NTPSSISPSNSVGSQGSGSNTPPGR.

This sequence belongs to the AF4 family. In terms of assembly, component of the super elongation complex (SEC), at least composed of Ell, Cdk9, cyclin-T (CycT), lilli and ear.

It localises to the nucleus. Its function is as follows. Has a role in transcriptional regulation. Acts in parallel with the Ras/MAPK and the PI3K/PKB pathways in the control of cell identity and cellular growth. Essential for regulation of the cytoskeleton and cell growth but not for cell proliferation or growth rate. Required specifically for the microtubule-based basal transport of lipid droplets. Plays a partially redundant function downstream of Raf in cell fate specification in the developing eye. Pair-rule protein that regulates embryonic cellularization, gastrulation and segmentation. In Drosophila melanogaster (Fruit fly), this protein is AF4/FMR2 family member lilli.